The primary structure comprises 822 residues: Penicillin-binding protein 1A (822 aa).

Residues 1 to 5 lie on the Cytoplasmic side of the membrane; sequence MRLLK. A helical; Signal-anchor for type II membrane protein membrane pass occupies residues 6 to 26; it reads FLWWTCVTLICGVLLSFSGAY. Residues 27–822 are Periplasmic-facing; that stretch reads LYLSPSLPSV…DDEGAPIDLF (796 aa). Residues 48 to 216 are transglycosylase; that stretch reads LKVYSEDGKL…SRYNPLVNPT (169 aa). Glutamate 86 acts as the Proton donor; for transglycosylase activity in catalysis. Residues 403 to 744 are transpeptidase; sequence IRVQRQEDGT…GTVALPIWIR (342 aa). Serine 461 functions as the Acyl-ester intermediate; for transpeptidase activity in the catalytic mechanism. Disordered regions lie at residues 614–654 and 790–822; these read AADA…FEPT and KNED…IDLF. Residues 812-822 are compositionally biased toward acidic residues; sequence PDDEGAPIDLF.

In the N-terminal section; belongs to the glycosyltransferase 51 family. It in the C-terminal section; belongs to the transpeptidase family.

Its subcellular location is the cell inner membrane. The catalysed reaction is [GlcNAc-(1-&gt;4)-Mur2Ac(oyl-L-Ala-gamma-D-Glu-L-Lys-D-Ala-D-Ala)](n)-di-trans,octa-cis-undecaprenyl diphosphate + beta-D-GlcNAc-(1-&gt;4)-Mur2Ac(oyl-L-Ala-gamma-D-Glu-L-Lys-D-Ala-D-Ala)-di-trans,octa-cis-undecaprenyl diphosphate = [GlcNAc-(1-&gt;4)-Mur2Ac(oyl-L-Ala-gamma-D-Glu-L-Lys-D-Ala-D-Ala)](n+1)-di-trans,octa-cis-undecaprenyl diphosphate + di-trans,octa-cis-undecaprenyl diphosphate + H(+). It catalyses the reaction Preferential cleavage: (Ac)2-L-Lys-D-Ala-|-D-Ala. Also transpeptidation of peptidyl-alanyl moieties that are N-acyl substituents of D-alanine.. The protein operates within cell wall biogenesis; peptidoglycan biosynthesis. In terms of biological role, cell wall formation. Synthesis of cross-linked peptidoglycan from the lipid intermediates. The enzyme has a penicillin-insensitive transglycosylase N-terminal domain (formation of linear glycan strands) and a penicillin-sensitive transpeptidase C-terminal domain (cross-linking of the peptide subunits). This chain is Penicillin-binding protein 1A (mrcA), found in Pseudomonas aeruginosa (strain ATCC 15692 / DSM 22644 / CIP 104116 / JCM 14847 / LMG 12228 / 1C / PRS 101 / PAO1).